The sequence spans 458 residues: Bifunctional protein GlmU (458 aa).

The tract at residues 1 to 230 (MHKRTAVVLA…EREILGINSR (230 aa)) is pyrophosphorylase. UDP-N-acetyl-alpha-D-glucosamine-binding positions include 9 to 12 (LAAG), K23, Q73, and 78 to 79 (GT). D103 is a Mg(2+) binding site. G140, E155, N170, and N228 together coordinate UDP-N-acetyl-alpha-D-glucosamine. Position 228 (N228) interacts with Mg(2+). The tract at residues 231–251 (VQLAEAEAVLQDRLRRKWMDA) is linker. An N-acetyltransferase region spans residues 252–458 (GVTLIDPPSV…FLGRKHKGSQ (207 aa)). The UDP-N-acetyl-alpha-D-glucosamine site is built by R333 and K351. The active-site Proton acceptor is the H363. The UDP-N-acetyl-alpha-D-glucosamine site is built by Y366 and N377. Acetyl-CoA is bound by residues A380, 386–387 (NY), S405, A423, and R440.

This sequence in the N-terminal section; belongs to the N-acetylglucosamine-1-phosphate uridyltransferase family. It in the C-terminal section; belongs to the transferase hexapeptide repeat family. In terms of assembly, homotrimer. The cofactor is Mg(2+).

It localises to the cytoplasm. The catalysed reaction is alpha-D-glucosamine 1-phosphate + acetyl-CoA = N-acetyl-alpha-D-glucosamine 1-phosphate + CoA + H(+). The enzyme catalyses N-acetyl-alpha-D-glucosamine 1-phosphate + UTP + H(+) = UDP-N-acetyl-alpha-D-glucosamine + diphosphate. It functions in the pathway nucleotide-sugar biosynthesis; UDP-N-acetyl-alpha-D-glucosamine biosynthesis; N-acetyl-alpha-D-glucosamine 1-phosphate from alpha-D-glucosamine 6-phosphate (route II): step 2/2. The protein operates within nucleotide-sugar biosynthesis; UDP-N-acetyl-alpha-D-glucosamine biosynthesis; UDP-N-acetyl-alpha-D-glucosamine from N-acetyl-alpha-D-glucosamine 1-phosphate: step 1/1. Its pathway is bacterial outer membrane biogenesis; LPS lipid A biosynthesis. Functionally, catalyzes the last two sequential reactions in the de novo biosynthetic pathway for UDP-N-acetylglucosamine (UDP-GlcNAc). The C-terminal domain catalyzes the transfer of acetyl group from acetyl coenzyme A to glucosamine-1-phosphate (GlcN-1-P) to produce N-acetylglucosamine-1-phosphate (GlcNAc-1-P), which is converted into UDP-GlcNAc by the transfer of uridine 5-monophosphate (from uridine 5-triphosphate), a reaction catalyzed by the N-terminal domain. This is Bifunctional protein GlmU from Heliobacterium modesticaldum (strain ATCC 51547 / Ice1).